The primary structure comprises 671 residues: MGRLLLWVGLVLLMKPNDGTAYKLVCYFTNWAHSRPVPASILPRDLDPFLCTHLIFAFASMSNNQIVANNLQDEKILYPEFNKLKERNRALKTLLSVGGWNFGTSRFTTMLSTLASREKFIGSVVSFLRTHGFDGLDLFFLYPGLRGSPINDRWNFLFLIEELQFAFEKEALLTQRPRLLLSAAVSGIPYIIQTSYDVHLLGRRLDFINVLSYDLHGSWEKSTGHNSPLFSLPEDPKSSAFAMNYWRNLGAPADKLLMGFPAYGRTFHLLRESKNGLQAASMGPASPGKYTKQAGFLAYYEVCSFIQRAEKHWIDHQYVPYAYKGKEWVGYDDAVSFSYKAMFVKKEHFGGAMVWTLDMDDVRGTFCGNGPFPLVHILNELLVRAEFNSTPLPQFWFTLPVNSSGPGSESLPVTEELTTDTVKILPPGGEAMATEVHRKYEKVTTIPNGGFVTPAGTTSPTTHAVALERNAMAPGAKTTTSLDLLSETMTGMTVTVQTQTAGRETMTTVGNQSVTPGGETMTTVGNQSVTPGGETVTTVGNQSVTPGGETMTTVGNQSVTPGGETVTIVGNKSVTPVGETVTIVGNKSVTPGGQTTATVGSQSVTPPGMDTTLVYLQTMTLSEKGTSSKKAVVLEKVTVPPREISVMPNEQNTALNRENLIAEVESYSQDG.

Positions 1 to 21 are cleaved as a signal peptide; sequence MGRLLLWVGLVLLMKPNDGTA. In terms of domain architecture, GH18 spans 22 to 385; that stretch reads YKLVCYFTNW…HILNELLVRA (364 aa). Cys-26 and Cys-51 are disulfide-bonded. Chitin contacts are provided by residues 71 to 72, 98 to 101, Tyr-142, 211 to 214, and Trp-355; these read LQ, GGWN, and LSYD. Asn-402 carries an N-linked (GlcNAc...) asparagine glycan. Repeat copies occupy residues 490 to 504, 505 to 519, 520 to 534, 535 to 549, 550 to 564, 565 to 579, 580 to 594, and 595 to 609. The tract at residues 490-609 is 8 X 15 AA tandem repeats; sequence TGMTVTVQTQ…GSQSVTPPGM (120 aa). Asn-511, Asn-526, Asn-541, Asn-556, Asn-571, and Asn-586 each carry an N-linked (GlcNAc...) asparagine glycan.

It belongs to the glycosyl hydrolase 18 family. Post-translationally, highly O-glycosylated and also N-glycosylated. In terms of tissue distribution, oviduct.

The protein localises to the cytoplasmic vesicle. The protein resides in the secretory vesicle. Its function is as follows. Binds to oocyte zona pellucida in vivo. May play a role in the fertilization process and/or early embryonic development. Might act as a protective secretion influencing the first steps of the reproductive process necessary for the normal triggering of fertilization and early embryonic development. This Mesocricetus auratus (Golden hamster) protein is Oviduct-specific glycoprotein (OVGP1).